We begin with the raw amino-acid sequence, 177 residues long: ATP synthase subunit delta (177 aa).

This sequence belongs to the ATPase delta chain family. F-type ATPases have 2 components, F(1) - the catalytic core - and F(0) - the membrane proton channel. F(1) has five subunits: alpha(3), beta(3), gamma(1), delta(1), epsilon(1). F(0) has three main subunits: a(1), b(2) and c(10-14). The alpha and beta chains form an alternating ring which encloses part of the gamma chain. F(1) is attached to F(0) by a central stalk formed by the gamma and epsilon chains, while a peripheral stalk is formed by the delta and b chains.

It is found in the cell inner membrane. In terms of biological role, f(1)F(0) ATP synthase produces ATP from ADP in the presence of a proton or sodium gradient. F-type ATPases consist of two structural domains, F(1) containing the extramembraneous catalytic core and F(0) containing the membrane proton channel, linked together by a central stalk and a peripheral stalk. During catalysis, ATP synthesis in the catalytic domain of F(1) is coupled via a rotary mechanism of the central stalk subunits to proton translocation. Its function is as follows. This protein is part of the stalk that links CF(0) to CF(1). It either transmits conformational changes from CF(0) to CF(1) or is implicated in proton conduction. This Neisseria gonorrhoeae (strain NCCP11945) protein is ATP synthase subunit delta.